A 368-amino-acid polypeptide reads, in one-letter code: G kinase-anchoring protein 1 (368 aa).

Disordered regions lie at residues 18–127 (LQVD…WKQR), 152–260 (EEHK…VRTE), and 333–368 (LHTA…EGDV). A compositionally biased stretch (low complexity) spans 33 to 56 (PKAAGRGAGKPRSGKSPSGKNSQN). Residues 52–82 (KNSQNNEKKKEKRRRKKEQQQSEANELRSLA) are a coiled coil. 2 stretches are compositionally biased toward polar residues: residues 88–100 (QKST…TLQD) and 109–121 (ANVQ…QENW). Over residues 152-162 (EEHKKDADKAE) the composition is skewed to basic and acidic residues. Positions 170–180 (TGGKKDRKKNQ) are enriched in basic residues. Positions 194 to 238 (FQQEDQLKNKPEREPVNPALRDDKFFNKLEDDVSKIVQRDKRREQ) are enriched in basic and acidic residues. Polar residues predominate over residues 239 to 250 (YSNSAGQEVNTS). Over residues 251-260 (SEHEQDVRTE) the composition is skewed to basic and acidic residues. Positions 256–350 (DVRTEQLKYE…RSKVKGLQSE (95 aa)) form a coiled coil.

It belongs to the GKAP1 family.

The protein localises to the golgi apparatus. Functionally, may play a role in the regulation of insulin-dependent IRS1 tyrosine phosphorylation in adipocytes. This Danio rerio (Zebrafish) protein is G kinase-anchoring protein 1 (gkap1).